The following is a 206-amino-acid chain: Small ribosomal subunit protein uS4 (206 aa).

Residues 96 to 156 (CRLDNVVYRM…EKAKNQLRIV (61 aa)) form the S4 RNA-binding domain.

It belongs to the universal ribosomal protein uS4 family. As to quaternary structure, part of the 30S ribosomal subunit. Contacts protein S5. The interaction surface between S4 and S5 is involved in control of translational fidelity.

In terms of biological role, one of the primary rRNA binding proteins, it binds directly to 16S rRNA where it nucleates assembly of the body of the 30S subunit. With S5 and S12 plays an important role in translational accuracy. The chain is Small ribosomal subunit protein uS4 from Pseudomonas fluorescens (strain Pf0-1).